A 71-amino-acid chain; its full sequence is UPF0346 protein SZO_05010 (71 aa).

The protein belongs to the UPF0346 family.

This is UPF0346 protein SZO_05010 from Streptococcus equi subsp. zooepidemicus (strain H70).